The primary structure comprises 1188 residues: Carboxylic acid reductase (1188 aa).

AMP-binding positions include His315, Ser408, 429–430 (DG), Thr434, Asp507, 519–522 (YVDR), Lys528, and Lys629. The Carrier domain maps to 665-743 (AGERPVIETV…SVAAHIEKER (79 aa)). An O-(pantetheine 4'-phosphoryl)serine modification is found at Ser702. NADP(+) contacts are provided by residues 801–804 (NGWL), Arg828, Arg838, 868–869 (DF), 894–896 (SGA), Ser934, Tyr970, Lys974, and Ser997.

Belongs to the ATP-dependent AMP-binding enzyme family. Carboxylic acid reductase subfamily. The cofactor is pantetheine 4'-phosphate.

It carries out the reaction a carboxylate + ATP + NADPH + H(+) = an aldehyde + AMP + diphosphate + NADP(+). Functionally, catalyzes the ATP- and NADPH-dependent reduction of carboxylic acids to the corresponding aldehydes. Catalyzes the reduction of a very wide range of carboxylic acids, including benzoic acids, heterocyclic, phenylacetic, phenylpropanoic and fatty acid substrates. The protein is Carboxylic acid reductase of Segniliparus rugosus (strain ATCC BAA-974 / DSM 45345 / CCUG 50838 / CIP 108380 / JCM 13579 / CDC 945).